The sequence spans 161 residues: Allophycocyanin beta chain (161 aa).

Asparagine 71 carries the post-translational modification N4-methylasparagine. Cysteine 81 contacts (2R,3E)-phycocyanobilin.

It belongs to the phycobiliprotein family. As to quaternary structure, heterodimer of an alpha and a beta chain. Post-translationally, contains one covalently linked phycocyanobilin chromophore.

It localises to the cellular thylakoid membrane. Functionally, light-harvesting photosynthetic bile pigment-protein from the phycobiliprotein complex. Allophycocyanin has a maximum absorption at approximately 650 nanometers. This Anabaena cylindrica protein is Allophycocyanin beta chain (apcB).